The following is a 935-amino-acid chain: DNA repair protein rev1 (935 aa).

The region spanning 59 to 147 (SKSDLFHGLA…KILPWINYRT (89 aa)) is the BRCT domain. Positions 162-178 (SKPSQPEGNLEDIQTSS) are enriched in polar residues. Residues 162 to 193 (SKPSQPEGNLEDIQTSSQEEEHDNEKDKTKES) are disordered. Residues 184–193 (DNEKDKTKES) show a composition bias toward basic and acidic residues. Positions 235–245 (FFSSSRLHHLS) are interaction with target DNA. DCTP is bound by residues Arg240 and 283–287 (DFDCF). One can recognise a UmuC domain in the interval 279-460 (LLHVDFDCFF…LSVQDLPGVG (182 aa)). Positions 283 and 284 each coordinate Mg(2+). The tract at residues 310-312 (IKN) is interaction with target DNA. DCTP is bound by residues 317-323 (SCNYEAR), Asn329, and Asp378. Mg(2+) contacts are provided by Asp378 and Glu379. Interaction with target DNA regions lie at residues 460–463 (GSSQ) and 517–525 (RRSISVDVN).

It belongs to the DNA polymerase type-Y family. Mg(2+) serves as cofactor.

It is found in the nucleus. The protein localises to the nucleolus. Its subcellular location is the mitochondrion. The protein resides in the cytoplasm. It localises to the cytoskeleton. It is found in the spindle. In terms of biological role, deoxycytidyl transferase involved in DNA repair. Transfers a dCMP residue from dCTP to the 3'-end of a DNA primer in a template-dependent reaction. May assist in the first step in the bypass of abasic lesions by the insertion of a nucleotide opposite the lesion. Required for normal induction of mutations by physical and chemical agents. Involved in mitochondrial DNA mutagenesis. The chain is DNA repair protein rev1 from Schizosaccharomyces pombe (strain 972 / ATCC 24843) (Fission yeast).